Reading from the N-terminus, the 360-residue chain is UDP-N-acetylglucosamine--N-acetylmuramyl-(pentapeptide) pyrophosphoryl-undecaprenol N-acetylglucosamine transferase (360 aa).

Residues 14 to 16 (TGG), asparagine 131, arginine 167, serine 195, isoleucine 249, and glutamine 294 contribute to the UDP-N-acetyl-alpha-D-glucosamine site.

This sequence belongs to the glycosyltransferase 28 family. MurG subfamily.

The protein resides in the cell inner membrane. It catalyses the reaction di-trans,octa-cis-undecaprenyl diphospho-N-acetyl-alpha-D-muramoyl-L-alanyl-D-glutamyl-meso-2,6-diaminopimeloyl-D-alanyl-D-alanine + UDP-N-acetyl-alpha-D-glucosamine = di-trans,octa-cis-undecaprenyl diphospho-[N-acetyl-alpha-D-glucosaminyl-(1-&gt;4)]-N-acetyl-alpha-D-muramoyl-L-alanyl-D-glutamyl-meso-2,6-diaminopimeloyl-D-alanyl-D-alanine + UDP + H(+). Its pathway is cell wall biogenesis; peptidoglycan biosynthesis. In terms of biological role, cell wall formation. Catalyzes the transfer of a GlcNAc subunit on undecaprenyl-pyrophosphoryl-MurNAc-pentapeptide (lipid intermediate I) to form undecaprenyl-pyrophosphoryl-MurNAc-(pentapeptide)GlcNAc (lipid intermediate II). The polypeptide is UDP-N-acetylglucosamine--N-acetylmuramyl-(pentapeptide) pyrophosphoryl-undecaprenol N-acetylglucosamine transferase (Polaromonas naphthalenivorans (strain CJ2)).